We begin with the raw amino-acid sequence, 487 residues long: UDP-glycosyltransferase 72E1 (487 aa).

The active-site Proton acceptor is His-18. Residue His-18 participates in an anthocyanidin binding. The Charge relay role is filled by Asp-116. 7 residues coordinate UDP-alpha-D-glucose: Ala-351, Gln-353, His-368, Trp-371, Asn-372, Ser-373, and Glu-376. Residue Ala-391 coordinates an anthocyanidin. UDP-alpha-D-glucose contacts are provided by Glu-392 and Gln-393.

This sequence belongs to the UDP-glycosyltransferase family. As to quaternary structure, interacts with SIS8. Expressed in seedlings, roots and leaves.

It localises to the nucleus. It carries out the reaction (E)-coniferaldehyde + UDP-alpha-D-glucose = 4-O-(beta-D-glucosyl)-4-(E)-coniferyl aldehyde + UDP + H(+). It catalyses the reaction (E)-sinapaldehyde + UDP-alpha-D-glucose = 4-O-(beta-D-glucosyl)-4-trans-sinapoyl aldehyde + UDP + H(+). In terms of biological role, UDP-glycosyltransferase that glucosylates coniferyl aldehyde to form coniferyl aldehyde 4-O-glucoside. Glucosylates sinapyl aldehyde to form sinapyl aldehyde 4-O-glucoside. Is not active in presence of coniferyl alcohol or sinapyl alcohol. Can glucosylate the phytotoxic xenobiotic compound 2,4,5-trichlorophenol (TCP). In Arabidopsis thaliana (Mouse-ear cress), this protein is UDP-glycosyltransferase 72E1.